The primary structure comprises 186 residues: Putative inactive recombination-promoting nuclease-like protein YjiQ (186 aa).

Belongs to the Rpn/YhgA-like nuclease family.

Functionally, this pseudogene is the C-terminal fragment of low activity DNA endonuclease RpnD which probably yields 3'-hydroxyl ends. The intact protein can be seen in this entry (AC B7NGZ6). Expression of the repaired protein increases the frequency of recA-independent recombination, but also decreases viability probably via DNA damage; in a RecA strain expression has no effect on viability but does induce the SOS repair response. May play a role in horizontal gene transfer. The chain is Putative inactive recombination-promoting nuclease-like protein YjiQ (yjiQ) from Escherichia coli (strain K12).